Here is a 200-residue protein sequence, read N- to C-terminus: Glycerol-3-phosphate acyltransferase (200 aa).

Helical transmembrane passes span 2–22, 51–71, 84–104, 114–134, and 158–178; these read FNIP…AVIV, KAAA…VLLA, AIAA…FFGF, LGVL…IWLV, and LFFM…ILVL.

The protein belongs to the PlsY family. As to quaternary structure, probably interacts with PlsX.

It localises to the cell inner membrane. The catalysed reaction is an acyl phosphate + sn-glycerol 3-phosphate = a 1-acyl-sn-glycero-3-phosphate + phosphate. Its pathway is lipid metabolism; phospholipid metabolism. Functionally, catalyzes the transfer of an acyl group from acyl-phosphate (acyl-PO(4)) to glycerol-3-phosphate (G3P) to form lysophosphatidic acid (LPA). This enzyme utilizes acyl-phosphate as fatty acyl donor, but not acyl-CoA or acyl-ACP. The sequence is that of Glycerol-3-phosphate acyltransferase from Neisseria gonorrhoeae (strain ATCC 700825 / FA 1090).